We begin with the raw amino-acid sequence, 383 residues long: Adaptive-response sensory kinase SasA (383 aa).

Residues 152–365 (MVAHELRTPL…CFTFTVPIWQ (214 aa)) enclose the Histidine kinase domain. His-155 carries the post-translational modification Phosphohistidine; by autocatalysis.

In terms of assembly, homooligomerizes. Interacts with KaiC. Participates in the KaiABC clock complex, whose core is composed of a KaiC homohexamer, 6 KaiB and up to 6 KaiA dimers. SasA and KaiB(fs) compete to bind to KaiC.

It carries out the reaction ATP + protein L-histidine = ADP + protein N-phospho-L-histidine.. In terms of biological role, member of the two-component regulatory system SasA/RpaA involved in genome-wide circadian gene expression. One of several clock output pathways. Participates in the Kai clock protein complex, the main circadian regulator in cyanobacteria, via its interaction with KaiC. KaiC enhances the autophosphorylation activity of SasA, which then transfers its phosphate group to RpaA to activate it. In addition to its output function, recruits fold-shifted KaiB (KaiB(fs)) to KaiC to cooperatively form the KaiB(6):KaiC(6) complex (independent of SasA kinase activity). Required for robustness of the circadian rhythm of gene expression and is involved in clock output, also required for adaptation to light/dark cycles. In Synechococcus sp. (strain CC9902), this protein is Adaptive-response sensory kinase SasA.